The primary structure comprises 201 residues: Superoxide dismutase [Mn] (201 aa).

The Mn(2+) site is built by His27, His81, Asp163, and His167.

Belongs to the iron/manganese superoxide dismutase family. In terms of assembly, homodimer. The cofactor is Mn(2+).

It localises to the secreted. The catalysed reaction is 2 superoxide + 2 H(+) = H2O2 + O2. In terms of biological role, destroys superoxide anion radicals which are normally produced within the cells and which are toxic to biological systems. The polypeptide is Superoxide dismutase [Mn] (sodA) (Streptococcus pyogenes serotype M6 (strain ATCC BAA-946 / MGAS10394)).